A 163-amino-acid chain; its full sequence is UPF0262 protein RPE_4483 (163 aa).

It belongs to the UPF0262 family.

The polypeptide is UPF0262 protein RPE_4483 (Rhodopseudomonas palustris (strain BisA53)).